Consider the following 131-residue polypeptide: Profilin (131 aa).

Cys-13 and Cys-115 form a disulfide bridge. Residues 81–97 carry the Involved in PIP2 interaction motif; sequence AVIRGKKGSGGVTVKKT. Thr-111 bears the Phosphothreonine mark.

The protein belongs to the profilin family. As to quaternary structure, occurs in many kinds of cells as a complex with monomeric actin in a 1:1 ratio.

The protein resides in the cytoplasm. It localises to the cytoskeleton. In terms of biological role, binds to actin and affects the structure of the cytoskeleton. At high concentrations, profilin prevents the polymerization of actin, whereas it enhances it at low concentrations. The sequence is that of Profilin from Phoenix dactylifera (Date palm).